Reading from the N-terminus, the 135-residue chain is Ribonuclease VapC35 (135 aa).

Positions 2–123 (IYLETSALVK…DNRLKEAAEA (122 aa)) constitute a PINc domain. Residues Glu-5 and Asp-91 each coordinate Mg(2+).

Belongs to the PINc/VapC protein family. Mg(2+) serves as cofactor.

In terms of biological role, toxic component of a type II toxin-antitoxin (TA) system. An RNase. Its toxic effect is neutralized by coexpression with cognate antitoxin VapB35. This chain is Ribonuclease VapC35, found in Mycobacterium tuberculosis (strain CDC 1551 / Oshkosh).